Consider the following 263-residue polypeptide: MPYITKISAQKNNEERVNIFLDEKYAFSVDLDVLVKFDLRKGKELDELDIIEIQYGDDVKKGFKKALDYLSYRMRSTKEVQDHLKKKGVADSAITEILHMLKGYKYLDDREFAAAYVSTHRKTSGKGPDVLFRELKLKGIDDELIHEALSSFSFSDQVEAAVKHAEKVLKKEKKLSSKETKQAIEQHLVRKGFSFDVISAALQETDYENDDGAEREALEKQGEKAMKRYGYDGSYETKMKVKQYLFRKGFSIDLIDQFLDEKG.

Belongs to the RecX family.

It is found in the cytoplasm. Functionally, modulates RecA activity. The polypeptide is Regulatory protein RecX (Bacillus licheniformis (strain ATCC 14580 / DSM 13 / JCM 2505 / CCUG 7422 / NBRC 12200 / NCIMB 9375 / NCTC 10341 / NRRL NRS-1264 / Gibson 46)).